The following is a 138-amino-acid chain: Acidic phospholipase A2 BmooPLA2 (138 aa).

The N-terminal stretch at 1 to 16 (MRTLWIVAVLLLGVEG) is a signal peptide. 7 disulfides stabilise this stretch: cysteine 42/cysteine 131, cysteine 44/cysteine 60, cysteine 59/cysteine 111, cysteine 65/cysteine 138, cysteine 66/cysteine 104, cysteine 73/cysteine 97, and cysteine 91/cysteine 102. 3 residues coordinate Ca(2+): tyrosine 43, glycine 45, and glycine 47. Histidine 63 is an active-site residue. Aspartate 64 contributes to the Ca(2+) binding site. Residue aspartate 105 is part of the active site.

Belongs to the phospholipase A2 family. Group II subfamily. D49 sub-subfamily. It depends on Ca(2+) as a cofactor. Expressed by the venom gland.

It is found in the secreted. It catalyses the reaction a 1,2-diacyl-sn-glycero-3-phosphocholine + H2O = a 1-acyl-sn-glycero-3-phosphocholine + a fatty acid + H(+). Snake venom phospholipase A2 (PLA2) that inhibits ADP- and collagen-induced platelet aggregation, has edema-inducing, anti-coagulant activity, antibacterial activity, and cytotoxic activity. In vivo, has a hypotensive effect. PLA2 catalyzes the calcium-dependent hydrolysis of the 2-acyl groups in 3-sn-phosphoglycerides. This is Acidic phospholipase A2 BmooPLA2 from Bothrops moojeni (Lance-headed viper).